The primary structure comprises 153 residues: Alpha-amylase type B isozyme (153 aa).

Substrate is bound by residues lysine 19, 25 to 27 (GWW), histidine 38, glutamine 44, lysine 123, and tryptophan 150.

The protein belongs to the glycosyl hydrolase 13 family. Monomer. Ca(2+) is required as a cofactor.

It carries out the reaction Endohydrolysis of (1-&gt;4)-alpha-D-glucosidic linkages in polysaccharides containing three or more (1-&gt;4)-alpha-linked D-glucose units.. This is Alpha-amylase type B isozyme (AMY1.4) from Hordeum vulgare (Barley).